Consider the following 254-residue polypeptide: Adenosylcobinamide-GDP ribazoletransferase (254 aa).

7 helical membrane passes run 27–47 (SSLY…VLFA), 50–70 (GMGA…GFIL), 104–124 (VGSF…ICLL), 131–151 (AYGM…LLAA), 170–190 (AGWP…FVLL), 194–214 (VVPS…VGWL), and 233–253 (LVEI…FSAI).

Belongs to the CobS family. The cofactor is Mg(2+).

The protein resides in the cell inner membrane. It catalyses the reaction alpha-ribazole + adenosylcob(III)inamide-GDP = adenosylcob(III)alamin + GMP + H(+). The catalysed reaction is alpha-ribazole 5'-phosphate + adenosylcob(III)inamide-GDP = adenosylcob(III)alamin 5'-phosphate + GMP + H(+). It functions in the pathway cofactor biosynthesis; adenosylcobalamin biosynthesis; adenosylcobalamin from cob(II)yrinate a,c-diamide: step 7/7. Joins adenosylcobinamide-GDP and alpha-ribazole to generate adenosylcobalamin (Ado-cobalamin). Also synthesizes adenosylcobalamin 5'-phosphate from adenosylcobinamide-GDP and alpha-ribazole 5'-phosphate. The chain is Adenosylcobinamide-GDP ribazoletransferase from Chlorobaculum parvum (strain DSM 263 / NCIMB 8327) (Chlorobium vibrioforme subsp. thiosulfatophilum).